The primary structure comprises 269 residues: MSFFETLADRIDDRDSVVSVGLDPDPDRLPEFLDADLPRWAFNRRVIDATHEHAACYKPNAAFYEDSDGWRALEETIAYAHGKGVPVLLDAKRGDIGNTARQYATLLDDDGLGADAITANPYMGRDTLEPYLSRADKGVFILCRTSNSGGADFQNLTVGNDKRLYEYVAQRCQEWNEHENVGLVVGATAPEELESVRDLVDLPFLVPGVGAQGGDAAAAVDHGLADGVGLVNSSRGIIFAGEGAADEDEYFRAVGAAAKRLKQRLNKHR.

Catalysis depends on lysine 92, which acts as the Proton donor.

The protein belongs to the OMP decarboxylase family. Type 2 subfamily.

It carries out the reaction orotidine 5'-phosphate + H(+) = UMP + CO2. The protein operates within pyrimidine metabolism; UMP biosynthesis via de novo pathway; UMP from orotate: step 2/2. The sequence is that of Orotidine 5'-phosphate decarboxylase from Natronomonas pharaonis (strain ATCC 35678 / DSM 2160 / CIP 103997 / JCM 8858 / NBRC 14720 / NCIMB 2260 / Gabara) (Halobacterium pharaonis).